Here is a 287-residue protein sequence, read N- to C-terminus: UPF0761 membrane protein MS0032 (287 aa).

6 helical membrane passes run 37–57 (MLAI…FPMF), 93–113 (SMSA…INQI), 128–148 (FIFS…FIGM), 174–194 (LLSF…YTLV), 204–224 (AAVG…AFAW), and 238–258 (AMAT…FILL).

The protein belongs to the UPF0761 family.

It is found in the cell inner membrane. The sequence is that of UPF0761 membrane protein MS0032 from Mannheimia succiniciproducens (strain KCTC 0769BP / MBEL55E).